Consider the following 198-residue polypeptide: Putative Do-like 15 protein (198 aa).

Positions 48 to 198 are serine protease; it reads KIFSFSREPN…VFENDSPSDK (151 aa). Active-site charge relay system residues include histidine 86 and serine 175.

The protein belongs to the peptidase S1B family.

The chain is Putative Do-like 15 protein (DEGP15) from Arabidopsis thaliana (Mouse-ear cress).